Consider the following 158-residue polypeptide: Low molecular weight phosphotyrosine protein phosphatase (158 aa).

At alanine 2 the chain carries N-acetylalanine. Catalysis depends on cysteine 13, which acts as the Nucleophile. Residue arginine 19 is part of the active site. Catalysis depends on aspartate 130, which acts as the Proton donor. Tyrosine 132 and tyrosine 133 each carry phosphotyrosine.

It belongs to the low molecular weight phosphotyrosine protein phosphatase family. Interacts with EPHA2; dephosphorylates EPHA2. Interacts with EPHB1. As to quaternary structure, interacts with the SH3 domain of SPTAN1. There is no interaction observed for isoform 2. Phosphorylated by LCK. Phosphorylation at Tyr-132 increases its phosphatase activity.

It localises to the cytoplasm. The catalysed reaction is O-phospho-L-tyrosyl-[protein] + H2O = L-tyrosyl-[protein] + phosphate. It carries out the reaction a phosphate monoester + H2O = an alcohol + phosphate. Inhibited by sulfhydryl reagents. Functionally, acts on tyrosine phosphorylated proteins, low-MW aryl phosphates and natural and synthetic acyl phosphates with differences in substrate specificity between isoform 1 and isoform 2. This is Low molecular weight phosphotyrosine protein phosphatase from Rattus norvegicus (Rat).